A 412-amino-acid polypeptide reads, in one-letter code: MKIYLVGGAVRDALLGLPVKDRDWVVVGSTPQEMLDAGYQQVGRDFPVFLHPQTHEEYALARTERKSGSGYTGFTCYAAPDVTLEDDLKRRDLTINALAQDDNGEIIDPYNGLGDLQNRLLRHVSPAFGEDPLRVLRVARFAARYAHLSFRIADETLALMREMTHAGELEHLTPERVWKETENALTTRNPQVFFQVLRDCGALRVLFPEIDALFGVPAPARWHPEIDTGIHTLMTLSMVAMLSPQVDVRFATLCHDLGKGLTPPELWPRHHGHGPAGVKLVEQLCQRLRVPNEIRDLARLVAEFHDLIHTFPMLNPKTIVKLFDSIDAWRKPQRVEQLALTSEADVRGRTGFESADYPQGRWLREAWEVAQSVPTKAVVEAGFKGVEIREELTRRRIAAVASWKEQRCPKPD.

2 residues coordinate ATP: glycine 8 and arginine 11. CTP is bound by residues glycine 8 and arginine 11. 2 residues coordinate Mg(2+): aspartate 21 and aspartate 23. ATP is bound by residues arginine 91, arginine 137, and arginine 140. Residues arginine 91, arginine 137, and arginine 140 each contribute to the CTP site. One can recognise an HD domain in the interval 228–329; sequence TGIHTLMTLS…VKLFDSIDAW (102 aa).

This sequence belongs to the tRNA nucleotidyltransferase/poly(A) polymerase family. Bacterial CCA-adding enzyme type 1 subfamily. As to quaternary structure, monomer. Can also form homodimers and oligomers. The cofactor is Mg(2+). It depends on Ni(2+) as a cofactor.

The catalysed reaction is a tRNA precursor + 2 CTP + ATP = a tRNA with a 3' CCA end + 3 diphosphate. It carries out the reaction a tRNA with a 3' CCA end + 2 CTP + ATP = a tRNA with a 3' CCACCA end + 3 diphosphate. Catalyzes the addition and repair of the essential 3'-terminal CCA sequence in tRNAs without using a nucleic acid template. Adds these three nucleotides in the order of C, C, and A to the tRNA nucleotide-73, using CTP and ATP as substrates and producing inorganic pyrophosphate. tRNA 3'-terminal CCA addition is required both for tRNA processing and repair. Also involved in tRNA surveillance by mediating tandem CCA addition to generate a CCACCA at the 3' terminus of unstable tRNAs. While stable tRNAs receive only 3'-terminal CCA, unstable tRNAs are marked with CCACCA and rapidly degraded. In Escherichia coli O127:H6 (strain E2348/69 / EPEC), this protein is Multifunctional CCA protein.